Consider the following 97-residue polypeptide: Glutamyl-tRNA(Gln) amidotransferase subunit C 2 (97 aa).

It belongs to the GatC family. Heterotrimer of A, B and C subunits.

It carries out the reaction L-glutamyl-tRNA(Gln) + L-glutamine + ATP + H2O = L-glutaminyl-tRNA(Gln) + L-glutamate + ADP + phosphate + H(+). The enzyme catalyses L-aspartyl-tRNA(Asn) + L-glutamine + ATP + H2O = L-asparaginyl-tRNA(Asn) + L-glutamate + ADP + phosphate + 2 H(+). Allows the formation of correctly charged Asn-tRNA(Asn) or Gln-tRNA(Gln) through the transamidation of misacylated Asp-tRNA(Asn) or Glu-tRNA(Gln) in organisms which lack either or both of asparaginyl-tRNA or glutaminyl-tRNA synthetases. The reaction takes place in the presence of glutamine and ATP through an activated phospho-Asp-tRNA(Asn) or phospho-Glu-tRNA(Gln). The protein is Glutamyl-tRNA(Gln) amidotransferase subunit C 2 (gatC2) of Clostridium acetobutylicum (strain ATCC 824 / DSM 792 / JCM 1419 / IAM 19013 / LMG 5710 / NBRC 13948 / NRRL B-527 / VKM B-1787 / 2291 / W).